The following is a 111-amino-acid chain: uncharacterized protein (111 aa).

This is an uncharacterized protein from Streptomyces coelicolor (strain ATCC BAA-471 / A3(2) / M145).